A 464-amino-acid chain; its full sequence is Interstitial collagenase A (464 aa).

Residues 1–17 form the signal peptide; that stretch reads MPSLPLLLLLWAASSYS. The propeptide at 18–96 is activation peptide; sequence FPVFHNGDRQ…PRCGVPDVAP (79 aa). Positions 87 to 94 match the Cysteine switch motif; that stretch reads PRCGVPDV. C89 lines the Zn(2+) pocket. The tract at residues 95-274 is metalloprotease; it reads APYAITHNNP…IQPTGATTPH (180 aa). D155 is a Ca(2+) binding site. 2 residues coordinate Zn(2+): H165 and D167. Residues D172 and G173 each coordinate Ca(2+). Residue H180 participates in Zn(2+) binding. Positions 187, 189, and 191 each coordinate Ca(2+). A Zn(2+)-binding site is contributed by H193. Ca(2+) is bound by residues D195 and E198. N202 carries an N-linked (GlcNAc...) asparagine glycan. Residue H215 participates in Zn(2+) binding. Residue E216 is part of the active site. Zn(2+)-binding residues include H219 and H225. 2 Hemopexin repeats span residues 273-322 and 323-369; these read PHPC…WPNL and PVKL…FGFP. Residues C276 and C464 are joined by a disulfide bond. A Ca(2+)-binding site is contributed by D283. N-linked (GlcNAc...) asparagine glycosylation occurs at N371. Hemopexin repeat units lie at residues 372-420 and 421-464; these read VTHI…FPGI and DDKV…WFNC. Residues D376 and D425 each coordinate Ca(2+).

It belongs to the peptidase M10A family. Ca(2+) is required as a cofactor. The cofactor is Zn(2+).

The protein localises to the secreted. Its subcellular location is the extracellular space. It localises to the extracellular matrix. The catalysed reaction is Cleavage of the triple helix of collagen at about three-quarters of the length of the molecule from the N-terminus, at 775-Gly-|-Ile-776 in the alpha1(I) chain. Cleaves synthetic substrates and alpha-macroglobulins at bonds where P1' is a hydrophobic residue.. With respect to regulation, can be activated without removal of the activation peptide. Its function is as follows. Cleaves collagens of types I, II, and III at one site in the helical domain. Also cleaves collagens of types VII and X. Able to degrade synthetic peptides and type I and II fibrillar collagen. This is Interstitial collagenase A (Mmp1a) from Mus musculus (Mouse).